Reading from the N-terminus, the 135-residue chain is Lymphocyte antigen 6B (135 aa).

Residues Met1–Gly26 form the signal peptide. The UPAR/Ly6 domain occupies Leu27 to Ala119. Cystine bridges form between Cys29-Cys54, Cys32-Cys41, Cys47-Cys75, Cys79-Cys99, and Cys100-Cys105. The GPI-anchor amidated glycine moiety is linked to residue Gly113. A propeptide spans Ser114–Leu135 (removed in mature form).

The protein localises to the cell membrane. The protein is Lymphocyte antigen 6B (Ly6b) of Rattus norvegicus (Rat).